We begin with the raw amino-acid sequence, 171 residues long: 3-hydroxydecanoyl-[acyl-carrier-protein] dehydratase (171 aa).

Residue histidine 70 is part of the active site.

The protein belongs to the thioester dehydratase family. FabA subfamily. Homodimer.

It is found in the cytoplasm. It catalyses the reaction a (3R)-hydroxyacyl-[ACP] = a (2E)-enoyl-[ACP] + H2O. It carries out the reaction (3R)-hydroxydecanoyl-[ACP] = (2E)-decenoyl-[ACP] + H2O. The enzyme catalyses (2E)-decenoyl-[ACP] = (3Z)-decenoyl-[ACP]. The protein operates within lipid metabolism; fatty acid biosynthesis. Functionally, necessary for the introduction of cis unsaturation into fatty acids. Catalyzes the dehydration of (3R)-3-hydroxydecanoyl-ACP to E-(2)-decenoyl-ACP and then its isomerization to Z-(3)-decenoyl-ACP. Can catalyze the dehydratase reaction for beta-hydroxyacyl-ACPs with saturated chain lengths up to 16:0, being most active on intermediate chain length. In Shewanella sp. (strain MR-4), this protein is 3-hydroxydecanoyl-[acyl-carrier-protein] dehydratase.